The sequence spans 201 residues: Alpha-1-acid glycoprotein 2 (201 aa).

A signal peptide spans 1 to 18 (MALSWVLTVLSLLPLLEA). Gln19 bears the Pyrrolidone carboxylic acid mark. Intrachain disulfides connect Cys23–Cys165 and Cys90–Cys183. N-linked (GlcNAc...) (complex) asparagine glycosylation is present at Asn33. N-linked (GlcNAc...) asparagine glycosylation is found at Asn56, Asn72, Asn93, and Asn103.

The protein belongs to the calycin superfamily. Lipocalin family. N-glycosylated. N-glycan heterogeneity at Asn-33: Hex5HexNAc4 (minor), Hex6HexNAc5 (major) and dHex1Hex6HexNAc5 (minor). As to expression, expressed by the liver and secreted in plasma.

The protein localises to the secreted. Functionally, functions as a transport protein in the blood stream. Binds various hydrophobic ligands in the interior of its beta-barrel domain. Also binds synthetic drugs and influences their distribution and availability. Appears to function in modulating the activity of the immune system during the acute-phase reaction. The sequence is that of Alpha-1-acid glycoprotein 2 (ORM2) from Homo sapiens (Human).